We begin with the raw amino-acid sequence, 628 residues long: Serine/threonine-protein kinase Nek11 (628 aa).

Positions 30–288 (YVLQQKLGSG…AADILKAPYM (259 aa)) constitute a Protein kinase domain. Residues 36–44 (LGSGSFGTV) and lysine 62 contribute to the ATP site. The active-site Proton acceptor is the aspartate 159. Phosphoserine; by CHEK1 is present on serine 274. Positions 347–385 (WLRKLQAADERARRLKKIAEENYKENDKRMQALRSRNVG) form a coiled coil. Over residues 452 to 463 (SEDSEEQEEEMI) the composition is skewed to acidic residues. The interval 452–475 (SEDSEEQEEEMIFSEAGGDTKEEE) is disordered.

This sequence belongs to the protein kinase superfamily. NEK Ser/Thr protein kinase family. NIMA subfamily. Interacts with NEK2. It depends on Mn(2+) as a cofactor. Requires Mg(2+) as cofactor. Post-translationally, phosphorylated by NEK2. Phosphorylation at Ser-274 is important for its activation.

It is found in the nucleus. It localises to the nucleolus. The catalysed reaction is L-seryl-[protein] + ATP = O-phospho-L-seryl-[protein] + ADP + H(+). The enzyme catalyses L-threonyl-[protein] + ATP = O-phospho-L-threonyl-[protein] + ADP + H(+). With respect to regulation, autorepressed by intramolecular binding of the C-terminus which dissociates following phosphorylation by NEK2. Activated in response to DNA damage. Inhibited by zinc. In terms of biological role, protein kinase which plays an important role in the G2/M checkpoint response to DNA damage. Controls degradation of CDC25A by directly phosphorylating it on residues whose phosphorylation is required for BTRC-mediated polyubiquitination and degradation. The sequence is that of Serine/threonine-protein kinase Nek11 from Mus musculus (Mouse).